The following is a 144-amino-acid chain: Transcriptional regulator SlyA (144 aa).

Positions 2–135 constitute an HTH marR-type domain; the sequence is ESPLGSDLAR…LITLIAKLEH (134 aa). The H-T-H motif DNA-binding region spans 49-72; sequence QIQLAKAIGIEQPSLVRTLDQLEE.

Belongs to the SlyA family. Homodimer.

Functionally, transcription regulator that can specifically activate or repress expression of target genes. The chain is Transcriptional regulator SlyA from Shigella boydii serotype 18 (strain CDC 3083-94 / BS512).